The chain runs to 301 residues: tRNA-cytidine(32) 2-sulfurtransferase (301 aa).

Positions 55-60 (SGGKDS) match the PP-loop motif motif. [4Fe-4S] cluster is bound by residues Cys-130, Cys-133, and Cys-221.

Belongs to the TtcA family. In terms of assembly, homodimer. It depends on Mg(2+) as a cofactor. [4Fe-4S] cluster serves as cofactor.

It localises to the cytoplasm. It carries out the reaction cytidine(32) in tRNA + S-sulfanyl-L-cysteinyl-[cysteine desulfurase] + AH2 + ATP = 2-thiocytidine(32) in tRNA + L-cysteinyl-[cysteine desulfurase] + A + AMP + diphosphate + H(+). It participates in tRNA modification. Its function is as follows. Catalyzes the ATP-dependent 2-thiolation of cytidine in position 32 of tRNA, to form 2-thiocytidine (s(2)C32). The sulfur atoms are provided by the cysteine/cysteine desulfurase (IscS) system. The sequence is that of tRNA-cytidine(32) 2-sulfurtransferase from Acinetobacter baylyi (strain ATCC 33305 / BD413 / ADP1).